The primary structure comprises 240 residues: 45 kDa antigen (240 aa).

Fibronectin type-III domains lie at 1-109 and 110-210; these read EFPD…FHTL and ANGT…KSGH.

The sequence is that of 45 kDa antigen from Taenia ovis (Sheep tapeworm).